The chain runs to 871 residues: DNA mismatch repair protein MutS (871 aa).

Residue 620–627 (GPNMGGKS) participates in ATP binding. A disordered region spans residues 806–837 (HHGGLNEPKQATMELTPPPEAIPSHTEKRNPL).

This sequence belongs to the DNA mismatch repair MutS family.

Its function is as follows. This protein is involved in the repair of mismatches in DNA. It is possible that it carries out the mismatch recognition step. This protein has a weak ATPase activity. The chain is DNA mismatch repair protein MutS from Idiomarina loihiensis (strain ATCC BAA-735 / DSM 15497 / L2-TR).